Reading from the N-terminus, the 303-residue chain is Olfactory receptor 10A2 (303 aa).

The Extracellular segment spans residues 1 to 12 (MSFSSLPTEIQS). Residues 13–33 (LLFLTFLTIYLVTLMGNCLII) form a helical membrane-spanning segment. Topologically, residues 34–41 (LVTLADPM) are cytoplasmic. Residues 42 to 62 (LHSPMYFFLRNLSFLEIGFNL) traverse the membrane as a helical segment. At 63–86 (VIVPKMLGTLLAQDTTISFLGCAT) the chain is on the extracellular side. Cysteine 84 and cysteine 176 are disulfide-bonded. The helical transmembrane segment at 87–107 (QMYFFFFFGVAECFLLATMAY) threads the bilayer. Over 108–126 (DRYVAICSPLHYPVIMNQR) the chain is Cytoplasmic. A helical membrane pass occupies residues 127-147 (TRAKLAAASWFPGFPVATVQT). At 148-184 (TWLFSFPFCGTNKVNHFFCDSPPVLRLVCADTALFEI) the chain is on the extracellular side. Residues 185–204 (YAIVGTILVVMIPCLLILCS) traverse the membrane as a helical segment. At 205-224 (YTHIAAAILKIPSAKGKNKA) the chain is on the cytoplasmic side. A helical transmembrane segment spans residues 225–245 (FSTCSSHLLVVSLFYISLSLT). Topologically, residues 246–258 (YFRPKSNNSPEGK) are extracellular. A helical transmembrane segment spans residues 259–279 (KLLSLSYTVMTPMLNPIIYSL). The Cytoplasmic portion of the chain corresponds to 280–301 (RNNEVKNALSRTVSKALALRNC).

Belongs to the G-protein coupled receptor 1 family.

The protein localises to the cell membrane. In terms of biological role, odorant receptor. The sequence is that of Olfactory receptor 10A2 (OR10A2) from Homo sapiens (Human).